Consider the following 221-residue polypeptide: Small ribosomal subunit protein uS4c (221 aa).

Residues 26–53 (RKRTDNRCMPGQHRKKRNDSTKKTKNSK) are disordered. The span at 37-53 (QHRKKRNDSTKKTKNSK) shows a compositional bias: basic residues. The 59-residue stretch at 103 to 161 (MRLDNIVFRLGMAPTIPAARQLVNHGHIVVNNKKVDISSYQCQSQDVISVTKNKTIRTL) folds into the S4 RNA-binding domain.

This sequence belongs to the universal ribosomal protein uS4 family. In terms of assembly, part of the 30S ribosomal subunit. Contacts protein S5. The interaction surface between S4 and S5 is involved in control of translational fidelity.

The protein resides in the plastid. It localises to the chloroplast. Its function is as follows. One of the primary rRNA binding proteins, it binds directly to 16S rRNA where it nucleates assembly of the body of the 30S subunit. With S5 and S12 plays an important role in translational accuracy. The polypeptide is Small ribosomal subunit protein uS4c (rps4) (Pleurastrum terricola (Filamentous green alga)).